We begin with the raw amino-acid sequence, 251 residues long: Triosephosphate isomerase (251 aa).

Position 9 to 11 (9 to 11) interacts with substrate; that stretch reads NWK. His94 serves as the catalytic Electrophile. Catalysis depends on Glu166, which acts as the Proton acceptor. Residues Gly172, Ser211, and 232–233 each bind substrate; that span reads GG.

The protein belongs to the triosephosphate isomerase family. Homodimer.

It localises to the cytoplasm. It catalyses the reaction D-glyceraldehyde 3-phosphate = dihydroxyacetone phosphate. Its pathway is carbohydrate biosynthesis; gluconeogenesis. It participates in carbohydrate degradation; glycolysis; D-glyceraldehyde 3-phosphate from glycerone phosphate: step 1/1. Functionally, involved in the gluconeogenesis. Catalyzes stereospecifically the conversion of dihydroxyacetone phosphate (DHAP) to D-glyceraldehyde-3-phosphate (G3P). The sequence is that of Triosephosphate isomerase from Xanthomonas campestris pv. campestris (strain 8004).